The following is a 348-amino-acid chain: Erlin-1 (348 aa).

Residues 1–7 lie on the Cytoplasmic side of the membrane; sequence MNMTQAR. A helical transmembrane segment spans residues 8–28; sequence VLVAAVVGLVAVLLYASIHKI. Over 29–348 the chain is Lumenal; sequence EEGHLAVYYR…NVIQNKESTG (320 aa). N-linked (GlcNAc...) asparagine glycosylation is present at N108. K269 is subject to N6-acetyllysine. The interval 325 to 348 is disordered; the sequence is SSLPSKEALEPSGENVIQNKESTG. Residues 339–348 are compositionally biased toward polar residues; it reads NVIQNKESTG.

The protein belongs to the band 7/mec-2 family. In terms of assembly, forms a heteromeric complex with ERLIN2. In complex with ERLIN2, interacts with RNF170. Interacts with AMFR and SYVN1. Deubiquitinated by USP25; leading to stabilization. In terms of tissue distribution, expressed in heart, placenta, liver, kidney, pancreas, prostate, testis, ovary and small intestine.

It is found in the endoplasmic reticulum membrane. Its function is as follows. Component of the ERLIN1/ERLIN2 complex which mediates the endoplasmic reticulum-associated degradation (ERAD) of inositol 1,4,5-trisphosphate receptors (IP3Rs). Involved in regulation of cellular cholesterol homeostasis by regulation the SREBP signaling pathway. Binds cholesterol and may promote ER retention of the SCAP-SREBF complex. (Microbial infection) Required early in hepatitis C virus (HCV) infection to initiate RNA replication, and later in the infection to support infectious virus production. The polypeptide is Erlin-1 (Homo sapiens (Human)).